A 253-amino-acid chain; its full sequence is Peptidase inhibitor R3HDML (253 aa).

A signal peptide spans 1-24 (MPLLPSTVGLAGLLFWAGQAVNAL). Positions 25 to 56 (IMPNATPAPAQPESTAMRLLSGLEVPRYRRKR) are excised as a propeptide. Residues 67–207 (LDYHNHIRAS…HRAAYLVCNY (141 aa)) form the SCP domain. A glycan (N-linked (GlcNAc...) asparagine) is linked at Asn-120.

Belongs to the CRISP family.

The protein localises to the secreted. Putative serine protease inhibitor. This Homo sapiens (Human) protein is Peptidase inhibitor R3HDML (R3HDML).